The chain runs to 339 residues: Anthranilate phosphoribosyltransferase (339 aa).

5-phospho-alpha-D-ribose 1-diphosphate is bound by residues glycine 79, 82–83 (GD), threonine 87, 89–92 (NVST), 107–115 (KHGNRAVSS), and serine 119. Glycine 79 contributes to the anthranilate binding site. Serine 91 is a binding site for Mg(2+). Anthranilate is bound at residue asparagine 110. Position 165 (arginine 165) interacts with anthranilate. Mg(2+)-binding residues include aspartate 224 and glutamate 225.

Belongs to the anthranilate phosphoribosyltransferase family. As to quaternary structure, homodimer. Mg(2+) serves as cofactor.

It carries out the reaction N-(5-phospho-beta-D-ribosyl)anthranilate + diphosphate = 5-phospho-alpha-D-ribose 1-diphosphate + anthranilate. It participates in amino-acid biosynthesis; L-tryptophan biosynthesis; L-tryptophan from chorismate: step 2/5. Its function is as follows. Catalyzes the transfer of the phosphoribosyl group of 5-phosphorylribose-1-pyrophosphate (PRPP) to anthranilate to yield N-(5'-phosphoribosyl)-anthranilate (PRA). The chain is Anthranilate phosphoribosyltransferase from Geobacillus kaustophilus (strain HTA426).